The chain runs to 740 residues: Phosphoribosylformylglycinamidine synthase subunit PurL (740 aa).

Residue H49 is part of the active site. ATP-binding residues include Y52 and K91. A Mg(2+)-binding site is contributed by E93. Residues 94 to 97 (SHNH) and R116 each bind substrate. The active-site Proton acceptor is H95. D117 lines the Mg(2+) pocket. Residue Q245 coordinates substrate. D273 serves as a coordination point for Mg(2+). A substrate-binding site is contributed by 317-319 (ESQ). Residues D501 and G538 each coordinate ATP. Mg(2+) is bound at residue N539. Substrate is bound at residue S541.

The protein belongs to the FGAMS family. As to quaternary structure, monomer. Part of the FGAM synthase complex composed of 1 PurL, 1 PurQ and 2 PurS subunits.

The protein localises to the cytoplasm. The enzyme catalyses N(2)-formyl-N(1)-(5-phospho-beta-D-ribosyl)glycinamide + L-glutamine + ATP + H2O = 2-formamido-N(1)-(5-O-phospho-beta-D-ribosyl)acetamidine + L-glutamate + ADP + phosphate + H(+). The protein operates within purine metabolism; IMP biosynthesis via de novo pathway; 5-amino-1-(5-phospho-D-ribosyl)imidazole from N(2)-formyl-N(1)-(5-phospho-D-ribosyl)glycinamide: step 1/2. In terms of biological role, part of the phosphoribosylformylglycinamidine synthase complex involved in the purines biosynthetic pathway. Catalyzes the ATP-dependent conversion of formylglycinamide ribonucleotide (FGAR) and glutamine to yield formylglycinamidine ribonucleotide (FGAM) and glutamate. The FGAM synthase complex is composed of three subunits. PurQ produces an ammonia molecule by converting glutamine to glutamate. PurL transfers the ammonia molecule to FGAR to form FGAM in an ATP-dependent manner. PurS interacts with PurQ and PurL and is thought to assist in the transfer of the ammonia molecule from PurQ to PurL. The sequence is that of Phosphoribosylformylglycinamidine synthase subunit PurL from Sulfurovum sp. (strain NBC37-1).